Reading from the N-terminus, the 456-residue chain is Bifunctional protein GlmU (456 aa).

Positions 1-228 (MSARLAAIVL…PQEIFGINDR (228 aa)) are pyrophosphorylase. UDP-N-acetyl-alpha-D-glucosamine-binding positions include 10 to 13 (LAAG), Lys-24, Gln-75, and 80 to 81 (GT). Asp-105 is a binding site for Mg(2+). UDP-N-acetyl-alpha-D-glucosamine contacts are provided by Gly-142, Glu-157, Asn-172, and Asn-226. Asn-226 contacts Mg(2+). Residues 229–249 (LQLSQASRILNERTLVGLMLS) form a linker region. The N-acetyltransferase stretch occupies residues 250 to 456 (GVTIVDPLRV…KAPYERTEDG (207 aa)). Positions 331 and 349 each coordinate UDP-N-acetyl-alpha-D-glucosamine. The active-site Proton acceptor is the His-361. The UDP-N-acetyl-alpha-D-glucosamine site is built by Tyr-364 and Asn-375. Acetyl-CoA contacts are provided by residues Ala-378, 384–385 (NY), Ala-421, and Arg-437.

The protein in the N-terminal section; belongs to the N-acetylglucosamine-1-phosphate uridyltransferase family. This sequence in the C-terminal section; belongs to the transferase hexapeptide repeat family. As to quaternary structure, homotrimer. It depends on Mg(2+) as a cofactor.

Its subcellular location is the cytoplasm. The enzyme catalyses alpha-D-glucosamine 1-phosphate + acetyl-CoA = N-acetyl-alpha-D-glucosamine 1-phosphate + CoA + H(+). It catalyses the reaction N-acetyl-alpha-D-glucosamine 1-phosphate + UTP + H(+) = UDP-N-acetyl-alpha-D-glucosamine + diphosphate. The protein operates within nucleotide-sugar biosynthesis; UDP-N-acetyl-alpha-D-glucosamine biosynthesis; N-acetyl-alpha-D-glucosamine 1-phosphate from alpha-D-glucosamine 6-phosphate (route II): step 2/2. It participates in nucleotide-sugar biosynthesis; UDP-N-acetyl-alpha-D-glucosamine biosynthesis; UDP-N-acetyl-alpha-D-glucosamine from N-acetyl-alpha-D-glucosamine 1-phosphate: step 1/1. Its pathway is bacterial outer membrane biogenesis; LPS lipid A biosynthesis. Its function is as follows. Catalyzes the last two sequential reactions in the de novo biosynthetic pathway for UDP-N-acetylglucosamine (UDP-GlcNAc). The C-terminal domain catalyzes the transfer of acetyl group from acetyl coenzyme A to glucosamine-1-phosphate (GlcN-1-P) to produce N-acetylglucosamine-1-phosphate (GlcNAc-1-P), which is converted into UDP-GlcNAc by the transfer of uridine 5-monophosphate (from uridine 5-triphosphate), a reaction catalyzed by the N-terminal domain. In Gloeobacter violaceus (strain ATCC 29082 / PCC 7421), this protein is Bifunctional protein GlmU.